The primary structure comprises 511 residues: D-alanine--D-alanyl carrier protein ligase (511 aa).

Residue 152–153 participates in ATP binding; it reads TS. D-alanine is bound at residue D199. An ATP-binding site is contributed by 294–299; sequence NAYGPT. V303 serves as a coordination point for D-alanine. Residues D385, 397-400, and K499 contribute to the ATP site; that span reads YGGR. D-alanine is bound at residue K499.

Belongs to the ATP-dependent AMP-binding enzyme family. DltA subfamily.

The protein localises to the cytoplasm. It catalyses the reaction holo-[D-alanyl-carrier protein] + D-alanine + ATP = D-alanyl-[D-alanyl-carrier protein] + AMP + diphosphate. It participates in cell wall biogenesis; lipoteichoic acid biosynthesis. Functionally, catalyzes the first step in the D-alanylation of lipoteichoic acid (LTA), the activation of D-alanine and its transfer onto the D-alanyl carrier protein (Dcp) DltC. In an ATP-dependent two-step reaction, forms a high energy D-alanyl-AMP intermediate, followed by transfer of the D-alanyl residue as a thiol ester to the phosphopantheinyl prosthetic group of the Dcp. D-alanylation of LTA plays an important role in modulating the properties of the cell wall in Gram-positive bacteria, influencing the net charge of the cell wall. In Streptococcus agalactiae serotype III (strain NEM316), this protein is D-alanine--D-alanyl carrier protein ligase.